The following is a 141-amino-acid chain: Calcitonin (141 aa).

An N-terminal signal peptide occupies residues 1–25 (MGFQKFSPFLALSILVLLQAGSLHA). The propeptide occupies 26 to 82 (APFRSALESSPADPATLSEDEARLLLAALVQDYVQMKASELEQEQEREGSSLDSPRS). Serine 43 carries the phosphoserine modification. Disordered regions lie at residues 64–85 (SELEQEQEREGSSLDSPRSKRC) and 111–141 (IGVGAPGKKRDMSSDLERDHRPHVSMPQNAN). Cysteine 85 and cysteine 91 are disulfide-bonded. Proline amide is present on proline 116. Positions 118-132 (KKRDMSSDLERDHRP) are enriched in basic and acidic residues.

It belongs to the calcitonin family.

It localises to the secreted. Functionally, calcitonin is a peptide hormone that causes a rapid but short-lived drop in the level of calcium and phosphate in blood by promoting the incorporation of those ions in the bones. Calcitonin function is mediated by the calcitonin receptor/CALCR and the CALCR-RAMP2 (AMYR2) receptor complex. Katacalcin is a potent plasma calcium-lowering peptide. The chain is Calcitonin from Homo sapiens (Human).